Reading from the N-terminus, the 495-residue chain is Trigger factor (495 aa).

A PPIase FKBP-type domain is found at 162 to 243; the sequence is DDFVSIDLSA…VKSLKERELP (82 aa). Residues 425–437 show a composition bias toward basic and acidic residues; that stretch reads DTDGNEIDPKEYF. The interval 425 to 495 is disordered; it reads DTDGNEIDPK…TDDDSENAEK (71 aa). Residues 450 to 461 show a composition bias toward low complexity; it reads SADAEASENSEA. The segment covering 486–495 has biased composition (acidic residues); that stretch reads TDDDSENAEK.

The protein belongs to the FKBP-type PPIase family. Tig subfamily.

Its subcellular location is the cytoplasm. The catalysed reaction is [protein]-peptidylproline (omega=180) = [protein]-peptidylproline (omega=0). In terms of biological role, involved in protein export. Acts as a chaperone by maintaining the newly synthesized protein in an open conformation. Functions as a peptidyl-prolyl cis-trans isomerase. The protein is Trigger factor of Corynebacterium kroppenstedtii (strain DSM 44385 / JCM 11950 / CIP 105744 / CCUG 35717).